A 312-amino-acid polypeptide reads, in one-letter code: Ubiquinone biosynthesis O-methyltransferase, mitochondrial (312 aa).

The transit peptide at 1-32 (MLLRSRFLKVIHVRKQLSACSRFAIQTQTRCK) directs the protein to the mitochondrion. S-adenosyl-L-methionine contacts are provided by R68, G130, D153, and M196. Positions 197, 200, and 201 each coordinate Mg(2+).

Belongs to the class I-like SAM-binding methyltransferase superfamily. UbiG/COQ3 family. In terms of assembly, component of a multi-subunit COQ enzyme complex, composed of at least COQ3, COQ4, COQ5, COQ6, COQ7 and COQ9. Interacts directly with COQ4. Requires Mg(2+) as cofactor.

The protein localises to the mitochondrion inner membrane. It carries out the reaction 3,4-dihydroxy-5-(all-trans-hexaprenyl)benzoate + S-adenosyl-L-methionine = 4-hydroxy-3-methoxy-5-(all-trans-hexaprenyl)benzoate + S-adenosyl-L-homocysteine + H(+). The enzyme catalyses a 3-demethylubiquinone + S-adenosyl-L-methionine = a ubiquinone + S-adenosyl-L-homocysteine. It catalyses the reaction 3-demethylubiquinol-6 + S-adenosyl-L-methionine = ubiquinol-6 + S-adenosyl-L-homocysteine + H(+). It functions in the pathway cofactor biosynthesis; ubiquinone biosynthesis. With respect to regulation, regulated in response to catabolite repression. O-methyltransferase required for two non-consecutive steps during ubiquinone biosynthesis. Catalyzes the 2 O-methylation of 3,4-dihydroxy-5-(all-trans-hexaprenyl)benzoic acid into 4-hydroxy-3-methoxy-5-(all-trans-hexaprenyl)benzoic acid. Also catalyzes the last step of ubiquinone biosynthesis by mediating methylation of 3-demethylubiquinone into ubiquinone. Also able to mediate the methylation of 3-demethylubiquinol-6 into ubiquinol-6. The chain is Ubiquinone biosynthesis O-methyltransferase, mitochondrial from Saccharomyces cerevisiae (strain ATCC 204508 / S288c) (Baker's yeast).